Consider the following 399-residue polypeptide: 3-methyl-2-oxobutanoate hydroxymethyltransferase 2, mitochondrial (399 aa).

The transit peptide at methionine 1–arginine 90 directs the protein to the mitochondrion. Mg(2+)-binding residues include aspartate 125 and aspartate 164. 3-methyl-2-oxobutanoate is bound by residues aspartate 125 to serine 126, aspartate 164, and lysine 194. Residue glutamate 196 participates in Mg(2+) binding. Catalysis depends on glutamate 264, which acts as the Proton acceptor.

The protein belongs to the PanB family. Requires Mg(2+) as cofactor.

Its subcellular location is the mitochondrion. The catalysed reaction is 3-methyl-2-oxobutanoate + (6R)-5,10-methylene-5,6,7,8-tetrahydrofolate + H2O = 2-dehydropantoate + (6S)-5,6,7,8-tetrahydrofolate. It participates in cofactor biosynthesis; (R)-pantothenate biosynthesis; (R)-pantoate from 3-methyl-2-oxobutanoate: step 1/2. Its function is as follows. Catalyzes the reversible reaction in which hydroxymethyl group from 5,10-methylenetetrahydrofolate is transferred onto alpha-ketoisovalerate to form ketopantoate. This chain is 3-methyl-2-oxobutanoate hydroxymethyltransferase 2, mitochondrial (KPHMT2), found in Oryza sativa subsp. japonica (Rice).